The sequence spans 348 residues: Oxidase ucsJ (348 aa).

This sequence belongs to the avfA family.

The protein operates within mycotoxin biosynthesis. Its function is as follows. Oxidase; part of the gene cluster that mediates the biosynthesis of UCS1025A, a member of the pyrrolizidinone family that acts as a strong telomerase inhibitor and displays potent antibacterial and antitumor properties. These compounds share a hemiaminal-containing pyrrolizidinone core fused with a gamma-lactone, giving a furopyrrolizidine that is connected to a decalin fragment. The polyketide synthase module (PKS) of the PKS-NRPS ucsA is responsible for the synthesis of the polyketide backbone via the condensation of an acetyl-CoA starter unit with 6 malonyl-CoA units. The downstream nonribosomal peptide synthetase (NRPS) module then amidates the carboxyl end of the polyketide with a 2S,3S-methylproline derived from L-isoleucine by the 2-oxoglutarate-dependent dioxygenase ucsF which converts L-isoleucine to (4S,5S)-4-methylpyrroline-5-carboxylate that is further converted to 2S,3S-methylproline by the pyrroline-5-carboxylate reductase ucsG. Reductive release of the completed aminoacyl polyketide from the assembly line can form the 3-pyrrolin-2-one structure via an intramolecular Knoevenagel reaction. Because ucsA lacks a designated enoylreductase (ER) domain, the required activity is provided the enoyl reductase ucsL. This keto acyclic precursor is the substrate of the Diels-Alderase ucsH, that catalyzes the Diels-Alder cycloaddition. Oxidation of the 3S-methyl group to a carboxylate by the cytochrome P450 monooxygenase ucsK allows an oxa-Michael cyclization that might involve the reductase/dehydrogenase ucsI and which furnishes the furopyrrolizidine. The oxidase ucsJ likely plays a critical role in stereoselective reduction of the C5-C6 double bond to afford the required R-configured carboxylate group. Further enolization and oxidation at C5 by an unidentified enzyme affords the last intermediate that can undergo oxa-Michael cyclization to yield UCS1025A. This is Oxidase ucsJ from Acremonium sp.